The primary structure comprises 416 residues: Adenylosuccinate synthetase (416 aa).

GTP-binding positions include 13 to 19 and 41 to 43; these read GDEGKGK and GHT. The active-site Proton acceptor is the aspartate 14. Mg(2+) contacts are provided by aspartate 14 and glycine 41. IMP contacts are provided by residues 14-17, 39-42, threonine 126, arginine 140, glutamine 220, threonine 235, and arginine 299; these read DEGK and NAGH. Residue histidine 42 is the Proton donor of the active site. 295-301 is a binding site for substrate; the sequence is TTTGRKR. GTP is bound by residues arginine 301, 327–329, and 405–407; these read KLD and STS.

Belongs to the adenylosuccinate synthetase family. As to quaternary structure, homodimer. Mg(2+) serves as cofactor.

It localises to the cytoplasm. The catalysed reaction is IMP + L-aspartate + GTP = N(6)-(1,2-dicarboxyethyl)-AMP + GDP + phosphate + 2 H(+). Its pathway is purine metabolism; AMP biosynthesis via de novo pathway; AMP from IMP: step 1/2. Functionally, plays an important role in the de novo pathway of purine nucleotide biosynthesis. Catalyzes the first committed step in the biosynthesis of AMP from IMP. This chain is Adenylosuccinate synthetase, found in Campylobacter fetus subsp. fetus (strain 82-40).